Here is a 183-residue protein sequence, read N- to C-terminus: Ribosome rescue factor SmrB (183 aa).

Residues 98–173 (LDLHGLTQLQ…GDAALLVLIE (76 aa)) enclose the Smr domain.

This sequence belongs to the SmrB family. Associates with collided ribosomes, but not with correctly translating polysomes.

Acts as a ribosome collision sensor. Detects stalled/collided disomes (pairs of ribosomes where the leading ribosome is stalled and a second ribosome has collided with it) and endonucleolytically cleaves mRNA at the 5' boundary of the stalled ribosome. Stalled/collided disomes form a new interface (primarily via the 30S subunits) that binds SmrB. Cleaved mRNA becomes available for tmRNA ligation, leading to ribosomal subunit dissociation and rescue of stalled ribosomes. This Escherichia coli O17:K52:H18 (strain UMN026 / ExPEC) protein is Ribosome rescue factor SmrB.